The chain runs to 313 residues: MLDKIIRIATRQSPLALWQAHYVQHLLQANHPGLQIELVPMVTRGDIILDTPLAKVGGKGLFVKELELALLDGRADIAVHSMKDVPIAFPEGLGLVTICEREDPRDAFVSSHYAHLDDLPAGSVVGTSSLRRQCQLRERRPDLIIRDLRGNVGTRLAKLDNGDYQAIILAVAGLKRLGLENRIRYAMSAEESLPAVGQGAVGIECRLDDDHTRQLLAPLNHRHTELRVCAERAMNIRLEGGCQVPIGSYAELEGDTLWLRALVGAPDGSQMIRGERRGPAAEAEQMGIELADELLSRGAREILAAVYLDNPAR.

Cys-242 is modified (S-(dipyrrolylmethanemethyl)cysteine).

The protein belongs to the HMBS family. In terms of assembly, monomer. Requires dipyrromethane as cofactor.

It carries out the reaction 4 porphobilinogen + H2O = hydroxymethylbilane + 4 NH4(+). Its pathway is porphyrin-containing compound metabolism; protoporphyrin-IX biosynthesis; coproporphyrinogen-III from 5-aminolevulinate: step 2/4. In terms of biological role, tetrapolymerization of the monopyrrole PBG into the hydroxymethylbilane pre-uroporphyrinogen in several discrete steps. The polypeptide is Porphobilinogen deaminase (Yersinia pseudotuberculosis serotype O:1b (strain IP 31758)).